The primary structure comprises 245 residues: 4-hydroxy-tetrahydrodipicolinate reductase (245 aa).

NAD(+) contacts are provided by residues G7–V12, G75–T77, and A102–F105. Residue H132 is the Proton donor/acceptor of the active site. H133 lines the (S)-2,3,4,5-tetrahydrodipicolinate pocket. The active-site Proton donor is K136. Residue G142–T143 coordinates (S)-2,3,4,5-tetrahydrodipicolinate.

It belongs to the DapB family.

It is found in the cytoplasm. The catalysed reaction is (S)-2,3,4,5-tetrahydrodipicolinate + NAD(+) + H2O = (2S,4S)-4-hydroxy-2,3,4,5-tetrahydrodipicolinate + NADH + H(+). It carries out the reaction (S)-2,3,4,5-tetrahydrodipicolinate + NADP(+) + H2O = (2S,4S)-4-hydroxy-2,3,4,5-tetrahydrodipicolinate + NADPH + H(+). Its pathway is amino-acid biosynthesis; L-lysine biosynthesis via DAP pathway; (S)-tetrahydrodipicolinate from L-aspartate: step 4/4. Catalyzes the conversion of 4-hydroxy-tetrahydrodipicolinate (HTPA) to tetrahydrodipicolinate. This chain is 4-hydroxy-tetrahydrodipicolinate reductase, found in Mycobacterium sp. (strain JLS).